The following is a 343-amino-acid chain: MLTNRQLLILQVIINDFIQSAQPVGSRTLSKKDEITFSSATIRNEMADLEELGFIEKTHSSSGRIPSEKGYRYYVDHLLSPVKLTKTDLDLIHSIFKEKIFELEKTVQKSAQILSDLTNYTSIVLGPTLSENYLKQIQIVPIQPDKAVAILVTNTGHVENRTINFPAKVDLADIEKLVNILNDRLAGVPMDELNERIFKEVVTYLRQHIANYDSILESLRSTFHPAAHVEKLFFGGKINMLNQPEFHDIERVRSLLSLIEKEQDVLKLFQSSKAGISIKIGKENDYEEMENCSLITATYTVDTKQIGSIAIIGPTRMNYSRVVSLLQHVTSDLSKAFTSLYDE.

It belongs to the HrcA family.

In terms of biological role, negative regulator of class I heat shock genes (grpE-dnaK-dnaJ and groELS operons). Prevents heat-shock induction of these operons. The sequence is that of Heat-inducible transcription repressor HrcA from Bacillus velezensis (strain DSM 23117 / BGSC 10A6 / LMG 26770 / FZB42) (Bacillus amyloliquefaciens subsp. plantarum).